A 329-amino-acid chain; its full sequence is Aspartate--ammonia ligase (329 aa).

This sequence belongs to the class-II aminoacyl-tRNA synthetase family. AsnA subfamily.

It is found in the cytoplasm. The catalysed reaction is L-aspartate + NH4(+) + ATP = L-asparagine + AMP + diphosphate + H(+). Its pathway is amino-acid biosynthesis; L-asparagine biosynthesis; L-asparagine from L-aspartate (ammonia route): step 1/1. The protein is Aspartate--ammonia ligase of Ureaplasma parvum serovar 3 (strain ATCC 27815 / 27 / NCTC 11736).